A 437-amino-acid polypeptide reads, in one-letter code: O-acetyl-L-homoserine sulfhydrylase (437 aa).

An N6-(pyridoxal phosphate)lysine modification is found at K216.

The protein belongs to the trans-sulfuration enzymes family. As to quaternary structure, homohexamer. Requires pyridoxal 5'-phosphate as cofactor.

It carries out the reaction O-acetyl-L-homoserine + hydrogen sulfide = L-homocysteine + acetate. It catalyses the reaction O-acetyl-L-homoserine + methanethiol = L-methionine + acetate + H(+). The protein operates within amino-acid biosynthesis; L-methionine biosynthesis via de novo pathway; L-homocysteine from O-acetyl-L-homoserine: step 1/1. Its activity is regulated as follows. Inhibited by methionine and cystathionine. Its function is as follows. Catalyzes the conversion of O-acetyl-L-homoserine (OAH) into homocysteine in the methionine biosynthesis pathway. Can also use dimethyldisulfide and methanethiol as reduced sulfur sources, leading to the direct formation of methionine. Has weak cystathionine gamma-synthase activity. The protein is O-acetyl-L-homoserine sulfhydrylase of Corynebacterium glutamicum (strain ATCC 13032 / DSM 20300 / JCM 1318 / BCRC 11384 / CCUG 27702 / LMG 3730 / NBRC 12168 / NCIMB 10025 / NRRL B-2784 / 534).